The primary structure comprises 272 residues: Ribosomal RNA small subunit methyltransferase A (272 aa).

Residues Asn18, Leu20, Gly45, Glu66, Asp91, and Asn113 each coordinate S-adenosyl-L-methionine.

This sequence belongs to the class I-like SAM-binding methyltransferase superfamily. rRNA adenine N(6)-methyltransferase family. RsmA subfamily.

The protein resides in the cytoplasm. The catalysed reaction is adenosine(1518)/adenosine(1519) in 16S rRNA + 4 S-adenosyl-L-methionine = N(6)-dimethyladenosine(1518)/N(6)-dimethyladenosine(1519) in 16S rRNA + 4 S-adenosyl-L-homocysteine + 4 H(+). Functionally, specifically dimethylates two adjacent adenosines (A1518 and A1519) in the loop of a conserved hairpin near the 3'-end of 16S rRNA in the 30S particle. May play a critical role in biogenesis of 30S subunits. This is Ribosomal RNA small subunit methyltransferase A from Pectobacterium atrosepticum (strain SCRI 1043 / ATCC BAA-672) (Erwinia carotovora subsp. atroseptica).